Here is a 60-residue protein sequence, read N- to C-terminus: Chromatin protein Cren7 (60 aa).

This sequence belongs to the Cren7 family. Monomer. Post-translationally, methylated at multiple sites, to varying extents.

Its subcellular location is the chromosome. It localises to the cytoplasm. Its function is as follows. A chromatin protein, binds double-stranded DNA without sequence specificity. Constrains negative DNA supercoils. This chain is Chromatin protein Cren7, found in Saccharolobus islandicus (strain M.16.4 / Kamchatka #3) (Sulfolobus islandicus).